The chain runs to 335 residues: Putative T-box protein 7 (335 aa).

The T-box DNA-binding region spans Leu-73–Asn-246.

The protein resides in the nucleus. The chain is Putative T-box protein 7 from Caenorhabditis elegans.